Reading from the N-terminus, the 524-residue chain is Glucose-6-phosphate isomerase (524 aa).

E346 (proton donor) is an active-site residue. Active-site residues include H377 and K492.

The protein belongs to the GPI family.

It is found in the cytoplasm. The catalysed reaction is alpha-D-glucose 6-phosphate = beta-D-fructose 6-phosphate. The protein operates within carbohydrate biosynthesis; gluconeogenesis. It participates in carbohydrate degradation; glycolysis; D-glyceraldehyde 3-phosphate and glycerone phosphate from D-glucose: step 2/4. Catalyzes the reversible isomerization of glucose-6-phosphate to fructose-6-phosphate. This is Glucose-6-phosphate isomerase from Chlamydia trachomatis serovar A (strain ATCC VR-571B / DSM 19440 / HAR-13).